A 110-amino-acid polypeptide reads, in one-letter code: Cell cycle protein GpsB (110 aa).

Residues 37 to 63 (KDYTVYIALVKELQEENAKLKAKATSA) are a coiled coil. The disordered stretch occupies residues 59–79 (KATSAPASRPAYASATSEPSH). Residues 60-75 (ATSAPASRPAYASATS) are compositionally biased toward low complexity.

It belongs to the GpsB family. In terms of assembly, forms polymers through the coiled coil domains. Interacts with PBP1, MreC and EzrA.

Its subcellular location is the cytoplasm. In terms of biological role, divisome component that associates with the complex late in its assembly, after the Z-ring is formed, and is dependent on DivIC and PBP2B for its recruitment to the divisome. Together with EzrA, is a key component of the system that regulates PBP1 localization during cell cycle progression. Its main role could be the removal of PBP1 from the cell pole after pole maturation is completed. Also contributes to the recruitment of PBP1 to the division complex. Not essential for septum formation. This chain is Cell cycle protein GpsB, found in Streptococcus thermophilus (strain CNRZ 1066).